A 221-amino-acid chain; its full sequence is MDTLDELLPREKMLRSGIASLSDVELLALFLRTGTPGKDVMTLAKEILQHFGSLYGLLSADFAQFRGVNGIGLAKFAQLKGIAELARRYYSVRMNEESALLSPEMTREFLQSQLTGEEREIFLVIFLDVQHRVLQHSRLFSGTLNHVEVHPREIVREAIKLNASAVILAHNHPSGCAEPSKADKLITERVIKCCQFMDIRVLDHLIIGRGEYVSFAERGWI.

An MPN domain is found at 99 to 221 (ALLSPEMTRE…YVSFAERGWI (123 aa)). H170, H172, and D183 together coordinate Zn(2+). The JAMM motif motif lies at 170-183 (HNHPSGCAEPSKAD).

Belongs to the UPF0758 family. YicR subfamily.

This Salmonella paratyphi A (strain ATCC 9150 / SARB42) protein is UPF0758 protein YicR.